Here is a 999-residue protein sequence, read N- to C-terminus: Sarcoplasmic/endoplasmic reticulum calcium ATPase 3 (999 aa).

Topologically, residues M1–S48 are cytoplasmic. Residues L49–A69 form a helical membrane-spanning segment. Residues F70–V89 are Lumenal-facing. A helical membrane pass occupies residues E90–R110. Residues N111–L253 lie on the Cytoplasmic side of the membrane. The chain crosses the membrane as a helical span at residues D254 to V273. Topologically, residues I274–Y295 are lumenal. Residues F296–A313 traverse the membrane as a helical segment. The Ca(2+) site is built by V304, A305, I307, and E309. Over V314 to M757 the chain is Cytoplasmic. The 4-aspartylphosphate intermediate role is filled by D351. Mg(2+) contacts are provided by D351 and T353. Residue T353 coordinates ATP. An interaction with phospholamban 1 region spans residues E370–K400. E442, R489, K515, R560, T625, G626, D627, R678, and K684 together coordinate ATP. Residue D703 coordinates Mg(2+). An ATP-binding site is contributed by N706. Residues K758–L777 form a helical membrane-spanning segment. Residues N768 and E771 each contribute to the Ca(2+) site. Over T778–L787 the chain is Lumenal. Residues I788 to G808 form a helical membrane-spanning segment. The interval I788 to G808 is interaction with phospholamban 2. The Ca(2+) site is built by N796, T799, and D800. Topologically, residues F809–L828 are cytoplasmic. The helical transmembrane segment at I829–A851 threads the bilayer. Residues A852–T897 are Lumenal-facing. The helical transmembrane segment at T898 to S917 threads the bilayer. Residue E908 participates in Ca(2+) binding. The Cytoplasmic portion of the chain corresponds to E918–N930. A helical transmembrane segment spans residues I931–Y949. The Lumenal portion of the chain corresponds to V950 to W964. A helical membrane pass occupies residues P965 to K985. The Cytoplasmic portion of the chain corresponds to Y986–K999.

This sequence belongs to the cation transport ATPase (P-type) (TC 3.A.3) family. Type IIA subfamily. Interacts with sarcolipin (SLN). Interacts with phospholamban (PLN). Interacts with myoregulin (MRLN). Interacts with DWORF. Requires Mg(2+) as cofactor. In terms of tissue distribution, found in spleen, lung, intestine and brain.

The protein resides in the endoplasmic reticulum membrane. Its subcellular location is the sarcoplasmic reticulum membrane. It catalyses the reaction Ca(2+)(in) + ATP + H2O = Ca(2+)(out) + ADP + phosphate + H(+). Inhibited by sarcolipin (SLN), phospholamban (PLN) and myoregulin (MRLN). Enhanced by DWORF; DWORF increases activity by displacing sarcolipin (SLN), phospholamban (PLN) and myoregulin (MRLN). In terms of biological role, this magnesium-dependent enzyme catalyzes the hydrolysis of ATP coupled with the transport of calcium. Transports calcium ions from the cytosol into the sarcoplasmic/endoplasmic reticulum lumen. Contributes to calcium sequestration involved in muscular excitation/contraction. The polypeptide is Sarcoplasmic/endoplasmic reticulum calcium ATPase 3 (ATP2A3) (Gallus gallus (Chicken)).